Reading from the N-terminus, the 446-residue chain is ATP-dependent protease ATPase subunit HslU (446 aa).

ATP is bound by residues Val18, 60–65, Asp259, Glu324, and Arg396; that span reads GVGKTE.

The protein belongs to the ClpX chaperone family. HslU subfamily. A double ring-shaped homohexamer of HslV is capped on each side by a ring-shaped HslU homohexamer. The assembly of the HslU/HslV complex is dependent on binding of ATP.

Its subcellular location is the cytoplasm. ATPase subunit of a proteasome-like degradation complex; this subunit has chaperone activity. The binding of ATP and its subsequent hydrolysis by HslU are essential for unfolding of protein substrates subsequently hydrolyzed by HslV. HslU recognizes the N-terminal part of its protein substrates and unfolds these before they are guided to HslV for hydrolysis. The sequence is that of ATP-dependent protease ATPase subunit HslU from Acidovorax sp. (strain JS42).